A 223-amino-acid chain; its full sequence is Virulence transcriptional regulatory protein PhoP (223 aa).

The 115-residue stretch at 2–116 (RVLVVEDNAL…EVMARMQALM (115 aa)) folds into the Response regulatory domain. The residue at position 51 (D51) is a 4-aspartylphosphate. Positions 124–222 (SQVISLPPFQ…VRGQGYLFEL (99 aa)) form a DNA-binding region, ompR/PhoB-type.

Phosphorylated by PhoQ.

The protein localises to the cytoplasm. Its function is as follows. Member of the two-component regulatory system PhoQ/PhoP involved in virulence and adaptation to low Mg(2+) environments. Necessary for resistance to killing by polymorphonuclear leukocytes (PMNs) and cationic antimicrobial peptides (CAMP) they produce. This chain is Virulence transcriptional regulatory protein PhoP (phoP), found in Shigella flexneri.